A 558-amino-acid polypeptide reads, in one-letter code: Arginine--tRNA ligase (558 aa).

Residues 134–144 carry the 'HIGH' region motif; that stretch reads ANPTGPMVLVQ.

The protein belongs to the class-I aminoacyl-tRNA synthetase family. As to quaternary structure, monomer.

The protein localises to the cytoplasm. The enzyme catalyses tRNA(Arg) + L-arginine + ATP = L-arginyl-tRNA(Arg) + AMP + diphosphate. The polypeptide is Arginine--tRNA ligase (Symbiobacterium thermophilum (strain DSM 24528 / JCM 14929 / IAM 14863 / T)).